The following is a 209-amino-acid chain: Uracil phosphoribosyltransferase (209 aa).

5-phospho-alpha-D-ribose 1-diphosphate-binding positions include Arg79, Arg104, and 131–139 (DPMLATGNS). Uracil-binding positions include Ile194 and 199–201 (GDA). 5-phospho-alpha-D-ribose 1-diphosphate is bound at residue Asp200.

The protein belongs to the UPRTase family. It depends on Mg(2+) as a cofactor.

It catalyses the reaction UMP + diphosphate = 5-phospho-alpha-D-ribose 1-diphosphate + uracil. It functions in the pathway pyrimidine metabolism; UMP biosynthesis via salvage pathway; UMP from uracil: step 1/1. Its activity is regulated as follows. Allosterically activated by GTP. In terms of biological role, catalyzes the conversion of uracil and 5-phospho-alpha-D-ribose 1-diphosphate (PRPP) to UMP and diphosphate. The polypeptide is Uracil phosphoribosyltransferase (Variovorax paradoxus (strain S110)).